Consider the following 186-residue polypeptide: Ribosome-recycling factor (186 aa).

The protein belongs to the RRF family.

The protein resides in the cytoplasm. Functionally, responsible for the release of ribosomes from messenger RNA at the termination of protein biosynthesis. May increase the efficiency of translation by recycling ribosomes from one round of translation to another. The protein is Ribosome-recycling factor of Leifsonia xyli subsp. xyli (strain CTCB07).